The primary structure comprises 106 residues: MKSYAIIQTGSKQYQVSEGDIIDVELLDGVSEGQEIVFDQVLFTFDGSKVSLGTPTVKNAVVKGELLSRVRGEKVIAYKYKRRKNYHRKIGHRQNYLRVKISNLVM.

This sequence belongs to the bacterial ribosomal protein bL21 family. In terms of assembly, part of the 50S ribosomal subunit. Contacts protein L20.

Functionally, this protein binds to 23S rRNA in the presence of protein L20. The polypeptide is Large ribosomal subunit protein bL21 (Chlamydia abortus (strain DSM 27085 / S26/3) (Chlamydophila abortus)).